The primary structure comprises 191 residues: CASP-like protein 4C3 (191 aa).

The Cytoplasmic segment spans residues 1-29; the sequence is METGDSAVKSSQDVHYYGKSTAQKHRRSN. A helical transmembrane segment spans residues 30 to 50; that stretch reads GIILIFRALTFSFSLTSVIVM. Residues 51–72 are Extracellular-facing; sequence GTNRHRIDAQSRVAWYDFDPFR. Residues 73–93 traverse the membrane as a helical segment; the sequence is YVLAVNAIICIYSFVEIWLAV. Topologically, residues 94–116 are cytoplasmic; the sequence is YTYLKDTLFLPETFQVWFDYGHD. The chain crosses the membrane as a helical span at residues 117–137; sequence QGFAYLLFSANSAGIAMAQLL. Over 138–162 the chain is Extracellular; it reads QSGNSLIHGAYRCSDAGVFCTQARA. The helical transmembrane segment at 163-183 threads the bilayer; it reads SIGLGFGAFLFLALSSLLTGL. The Cytoplasmic portion of the chain corresponds to 184-191; it reads RVARWYFS.

The protein belongs to the Casparian strip membrane proteins (CASP) family. Homodimer and heterodimers.

The protein localises to the cell membrane. This is CASP-like protein 4C3 from Physcomitrium patens (Spreading-leaved earth moss).